The sequence spans 371 residues: Beta-1,3-galactosyltransferase 4 (371 aa).

Topologically, residues 1-4 (MPLS) are cytoplasmic. The helical; Signal-anchor for type II membrane protein transmembrane segment at 5–25 (LFRRVLLAVLLLVIIWTLFGP) threads the bilayer. Residues 26 to 371 (SGLGEELLSL…RCRFIAWFSS (346 aa)) are Lumenal-facing. N-linked (GlcNAc...) asparagine glycosylation occurs at asparagine 143.

This sequence belongs to the glycosyltransferase 31 family. In terms of tissue distribution, expressed in heart, brain, spleen, kidney, lung and testis.

It localises to the golgi apparatus membrane. It catalyses the reaction a ganglioside GM2 (d18:1(4E)) + UDP-alpha-D-galactose = a ganglioside GM1 (d18:1(4E)) + UDP + H(+). It carries out the reaction a ganglioside GM2 + UDP-alpha-D-galactose = a ganglioside GM1 + UDP + H(+). The enzyme catalyses a ganglioside GD2 (d18:1(4E)) + UDP-alpha-D-galactose = a ganglioside GD1b (d18:1(4E)) + UDP + H(+). The catalysed reaction is a ganglioside GA2 (d18:1(4E)) + UDP-alpha-D-galactose = a ganglioside GA1 (d18:1(4E)) + UDP + H(+). It participates in protein modification; protein glycosylation. Involved in GM1/GD1B/GA1 ganglioside biosynthesis. The polypeptide is Beta-1,3-galactosyltransferase 4 (Mus musculus (Mouse)).